Reading from the N-terminus, the 402-residue chain is Phosphoglycerate kinase (402 aa).

Substrate is bound by residues 24–26 (DFN), arginine 40, 63–66 (HFGR), arginine 122, and arginine 155. ATP-binding positions include lysine 206, glycine 297, glutamate 328, and 357 to 360 (GGDS).

It belongs to the phosphoglycerate kinase family. Monomer.

It localises to the cytoplasm. The catalysed reaction is (2R)-3-phosphoglycerate + ATP = (2R)-3-phospho-glyceroyl phosphate + ADP. Its pathway is carbohydrate degradation; glycolysis; pyruvate from D-glyceraldehyde 3-phosphate: step 2/5. This chain is Phosphoglycerate kinase, found in Synechococcus sp. (strain WH7803).